A 568-amino-acid polypeptide reads, in one-letter code: Glucose-6-phosphate isomerase, cytosolic 1 (568 aa).

Glu360 acts as the Proton donor in catalysis. Active-site residues include His391 and Lys516.

This sequence belongs to the GPI family. As to quaternary structure, homodimer.

Its subcellular location is the cytoplasm. The enzyme catalyses alpha-D-glucose 6-phosphate = beta-D-fructose 6-phosphate. It participates in carbohydrate degradation; glycolysis; D-glyceraldehyde 3-phosphate and glycerone phosphate from D-glucose: step 2/4. The sequence is that of Glucose-6-phosphate isomerase, cytosolic 1 (PGIC1) from Clarkia xantiana (Gunsight clarkia).